The chain runs to 154 residues: Superoxide dismutase [Cu-Zn] (154 aa).

Positions 47, 49, and 64 each coordinate Cu cation. An intrachain disulfide couples Cys-58 to Cys-147. His-64, His-72, His-81, and Asp-84 together coordinate Zn(2+). Residue His-121 participates in Cu cation binding. Arg-144 contacts substrate.

This sequence belongs to the Cu-Zn superoxide dismutase family. Homodimer. The cofactor is Cu cation. Zn(2+) serves as cofactor.

Its subcellular location is the cytoplasm. The catalysed reaction is 2 superoxide + 2 H(+) = H2O2 + O2. In terms of biological role, destroys radicals which are normally produced within the cells and which are toxic to biological systems. The chain is Superoxide dismutase [Cu-Zn] (sodC) from Aspergillus fumigatus (strain ATCC MYA-4609 / CBS 101355 / FGSC A1100 / Af293) (Neosartorya fumigata).